The following is a 276-amino-acid chain: NAD kinase (276 aa).

Asp-61 functions as the Proton acceptor in the catalytic mechanism. Residues 61 to 62 (DG), Arg-66, 135 to 136 (NE), Arg-146, His-163, Asp-165, and Ala-200 each bind NAD(+).

This sequence belongs to the NAD kinase family. Requires a divalent metal cation as cofactor.

Its subcellular location is the cytoplasm. It carries out the reaction NAD(+) + ATP = ADP + NADP(+) + H(+). Its function is as follows. Involved in the regulation of the intracellular balance of NAD and NADP, and is a key enzyme in the biosynthesis of NADP. Catalyzes specifically the phosphorylation on 2'-hydroxyl of the adenosine moiety of NAD to yield NADP. This is NAD kinase from Chloroflexus aggregans (strain MD-66 / DSM 9485).